A 131-amino-acid polypeptide reads, in one-letter code: uncharacterized protein (131 aa).

This is an uncharacterized protein from Escherichia coli.